Consider the following 133-residue polypeptide: Ribosome-binding factor A (133 aa).

The protein belongs to the RbfA family. In terms of assembly, monomer. Binds 30S ribosomal subunits, but not 50S ribosomal subunits or 70S ribosomes.

The protein resides in the cytoplasm. In terms of biological role, one of several proteins that assist in the late maturation steps of the functional core of the 30S ribosomal subunit. Associates with free 30S ribosomal subunits (but not with 30S subunits that are part of 70S ribosomes or polysomes). Required for efficient processing of 16S rRNA. May interact with the 5'-terminal helix region of 16S rRNA. This chain is Ribosome-binding factor A, found in Chelativorans sp. (strain BNC1).